The chain runs to 555 residues: GPI-anchor transamidase component PIGS (555 aa).

Over 2-18 (AAAGAAATHLEVARGKR) the chain is Cytoplasmic. The a cardiolipin site is built by R15 and R18. Residues 19–39 (AALFFAAVAIVLGLPLWWKTT) traverse the membrane as a helical segment. Topologically, residues 40-517 (ETYRASLPYS…LHLLYFPDDQ (478 aa)) are lumenal. Residues N267 and N370 are each glycosylated (N-linked (GlcNAc...) asparagine). A helical membrane pass occupies residues 518 to 532 (KFAIYIPLFLPMAVP). The Cytoplasmic segment spans residues 533–555 (ILLSLVKIFLETRKSWRKPEKTD).

Belongs to the PIGS family. In terms of assembly, heteropentamer. Part of the GPI-anchor transamidase complex, consisting of PIGK, PIGT, PIGS, PIGU and GAA1.

It is found in the endoplasmic reticulum membrane. It functions in the pathway glycolipid biosynthesis; glycosylphosphatidylinositol-anchor biosynthesis. Component of the glycosylphosphatidylinositol-anchor (GPI-anchor) transamidase (GPI-T) complex that catalyzes the formation of the linkage between a proprotein and a GPI-anchor and participates in GPI anchored protein biosynthesis. The chain is GPI-anchor transamidase component PIGS from Homo sapiens (Human).